The sequence spans 1889 residues: Protein TIC 214 (1889 aa).

Helical transmembrane passes span 11-31, 67-87, 88-108, 127-147, 175-195, and 224-244; these read LISL…YYGF, FIAG…HLAL, GKPH…FFWN, LSIQ…HFIL, VGWL…LVWI, and IFSI…PSPI. The span at 255 to 265 shows a compositional bias: acidic residues; the sequence is PEEVGESEEER. 2 disordered regions span residues 255–303 and 1610–1633; these read PEEV…PSKE and SNQE…KKKQ. Polar residues predominate over residues 279-293; the sequence is NQKQGTEENTSSSLF.

The protein belongs to the TIC214 family. In terms of assembly, part of the Tic complex.

It localises to the plastid. It is found in the chloroplast inner membrane. Involved in protein precursor import into chloroplasts. May be part of an intermediate translocation complex acting as a protein-conducting channel at the inner envelope. In Gossypium barbadense (Sea Island cotton), this protein is Protein TIC 214.